Here is a 346-residue protein sequence, read N- to C-terminus: MYQLARSLLFKLDPEVSHELSLDLLAASSRLGLNRFLGGLPSTKPVDVMGLRFPNAVGLAAGLDKNADAFEALGALGFGFVEVGTVTPKGQAGNPKPRLFRLPEHEAIINRMGFNNKGVDHLVSRIKSHRYPGVLGVNIGKNLTTSVEDAAADYLACLESVIPYADYITANISSPNTPGLRSLQFGESLAQLIAPLVAARDRYEAAYGKRVPLAVKIAPDMTDDEIKMVADTLVDQGVDGIIATNTTLSREAVLGHQFEKEAGGLSGMPVRDASTHVVKVLAEHLKDTLPIIGVGGISSGADAVEKLQAGARLVQIYSGFIYHGPELIKEAVASTDAYYRELDLGI.

FMN-binding positions include 61–65 (AGLDK) and Thr85. Lys65 contacts substrate. Substrate is bound at residue 110–114 (NRMGF). 2 residues coordinate FMN: Asn138 and Asn171. Residue Asn171 coordinates substrate. Catalysis depends on Ser174, which acts as the Nucleophile. Asn176 contacts substrate. FMN is bound by residues Lys216 and Thr244. 245 to 246 (NT) is a substrate binding site. FMN contacts are provided by residues Gly267, Gly296, and 317–318 (YS).

The protein belongs to the dihydroorotate dehydrogenase family. Type 2 subfamily. Monomer. FMN is required as a cofactor.

It localises to the cell membrane. It carries out the reaction (S)-dihydroorotate + a quinone = orotate + a quinol. The protein operates within pyrimidine metabolism; UMP biosynthesis via de novo pathway; orotate from (S)-dihydroorotate (quinone route): step 1/1. Functionally, catalyzes the conversion of dihydroorotate to orotate with quinone as electron acceptor. The sequence is that of Dihydroorotate dehydrogenase (quinone) from Marinomonas sp. (strain MWYL1).